Reading from the N-terminus, the 890-residue chain is Alanine--tRNA ligase (890 aa).

Zn(2+) contacts are provided by H568, H572, C680, and H684.

Belongs to the class-II aminoacyl-tRNA synthetase family. Zn(2+) serves as cofactor.

It is found in the cytoplasm. It catalyses the reaction tRNA(Ala) + L-alanine + ATP = L-alanyl-tRNA(Ala) + AMP + diphosphate. Its function is as follows. Catalyzes the attachment of alanine to tRNA(Ala) in a two-step reaction: alanine is first activated by ATP to form Ala-AMP and then transferred to the acceptor end of tRNA(Ala). Also edits incorrectly charged Ser-tRNA(Ala) and Gly-tRNA(Ala) via its editing domain. This Psychrobacter cryohalolentis (strain ATCC BAA-1226 / DSM 17306 / VKM B-2378 / K5) protein is Alanine--tRNA ligase.